Reading from the N-terminus, the 397-residue chain is Acetate kinase (397 aa).

A Mg(2+)-binding site is contributed by asparagine 8. Residue lysine 15 participates in ATP binding. Arginine 89 is a binding site for substrate. Aspartate 146 functions as the Proton donor/acceptor in the catalytic mechanism. Residues 206 to 210 (HIGNG), 281 to 283 (DLR), and 328 to 332 (GVGEN) each bind ATP. Glutamate 381 is a binding site for Mg(2+).

The protein belongs to the acetokinase family. As to quaternary structure, homodimer. The cofactor is Mg(2+). Requires Mn(2+) as cofactor.

Its subcellular location is the cytoplasm. It carries out the reaction acetate + ATP = acetyl phosphate + ADP. It functions in the pathway metabolic intermediate biosynthesis; acetyl-CoA biosynthesis; acetyl-CoA from acetate: step 1/2. Its function is as follows. Catalyzes the formation of acetyl phosphate from acetate and ATP. Can also catalyze the reverse reaction. The protein is Acetate kinase of Oceanobacillus iheyensis (strain DSM 14371 / CIP 107618 / JCM 11309 / KCTC 3954 / HTE831).